Reading from the N-terminus, the 549-residue chain is Chaperonin GroEL (549 aa).

ATP is bound by residues 30–33 (TLGP), K51, 87–91 (DGTTT), G415, and D495.

This sequence belongs to the chaperonin (HSP60) family. In terms of assembly, forms a cylinder of 14 subunits composed of two heptameric rings stacked back-to-back. Interacts with the co-chaperonin GroES.

Its subcellular location is the cytoplasm. It catalyses the reaction ATP + H2O + a folded polypeptide = ADP + phosphate + an unfolded polypeptide.. In terms of biological role, together with its co-chaperonin GroES, plays an essential role in assisting protein folding. The GroEL-GroES system forms a nano-cage that allows encapsulation of the non-native substrate proteins and provides a physical environment optimized to promote and accelerate protein folding. In Colwellia maris, this protein is Chaperonin GroEL.